A 504-amino-acid polypeptide reads, in one-letter code: 2-isopropylmalate synthase (504 aa).

The region spanning 6 to 267 (IIIFDTTLRD…YTGIISKEIY (262 aa)) is the Pyruvate carboxyltransferase domain. Mn(2+) is bound by residues Asp15, His201, His203, and Asn237. Residues 391–504 (EITDLLQSSG…LNSYLRIHKN (114 aa)) form a regulatory domain region.

This sequence belongs to the alpha-IPM synthase/homocitrate synthase family. LeuA type 1 subfamily. In terms of assembly, homodimer. Requires Mn(2+) as cofactor.

It localises to the cytoplasm. It carries out the reaction 3-methyl-2-oxobutanoate + acetyl-CoA + H2O = (2S)-2-isopropylmalate + CoA + H(+). Its pathway is amino-acid biosynthesis; L-leucine biosynthesis; L-leucine from 3-methyl-2-oxobutanoate: step 1/4. Functionally, catalyzes the condensation of the acetyl group of acetyl-CoA with 3-methyl-2-oxobutanoate (2-ketoisovalerate) to form 3-carboxy-3-hydroxy-4-methylpentanoate (2-isopropylmalate). The sequence is that of 2-isopropylmalate synthase from Campylobacter concisus (strain 13826).